The chain runs to 204 residues: Ribosomal RNA small subunit methyltransferase J (204 aa).

Residues 55 to 56 (RD), 71 to 72 (ER), and Asp123 contribute to the S-adenosyl-L-methionine site.

This sequence belongs to the methyltransferase superfamily. RsmJ family.

Its subcellular location is the cytoplasm. It catalyses the reaction guanosine(1516) in 16S rRNA + S-adenosyl-L-methionine = N(2)-methylguanosine(1516) in 16S rRNA + S-adenosyl-L-homocysteine + H(+). Specifically methylates the guanosine in position 1516 of 16S rRNA. The sequence is that of Ribosomal RNA small subunit methyltransferase J from Rhodopseudomonas palustris (strain TIE-1).